A 666-amino-acid polypeptide reads, in one-letter code: Calcium/calmodulin-dependent protein kinase type II subunit beta (666 aa).

In terms of domain architecture, Protein kinase spans 14–272 (YQLYEDIGKG…AHEALKHPWV (259 aa)). Tyr-17 bears the Phosphotyrosine mark. ATP-binding positions include 20 to 28 (IGKGAFSVV) and Lys-43. The active-site Proton acceptor is the Asp-136. Residues 283-292 (HRQETVECLK) are autoinhibitory domain. Position 287 is a phosphothreonine; by autocatalysis (Thr-287). The interval 291-301 (LKKFNARRKLK) is calmodulin-binding. Phosphothreonine; by autocatalysis occurs at positions 306 and 307. The interval 349–534 (ADGVKPQTNS…IPGPLPTPSR (186 aa)) is disordered. Polar residues predominate over residues 354 to 369 (PQTNSTKNSAAATSPK). Phosphoserine occurs at positions 367, 394, and 397. Phosphothreonine occurs at positions 400 and 401. Pro residues predominate over residues 432–447 (LPCPSPAPFSPLPAPS). Positions 479-491 (SPALLGPLSSPSP) are enriched in low complexity. A compositionally biased stretch (pro residues) spans 514–531 (PVGPPPCPSPTIPGPLPT).

Belongs to the protein kinase superfamily. CAMK Ser/Thr protein kinase family. CaMK subfamily. In terms of assembly, CAMK2 is composed of 4 different chains: alpha (CAMK2A), beta (CAMK2B), gamma (CAMK2G), and delta (CAMK2D). The different isoforms assemble into homo- or heteromultimeric holoenzymes composed of 12 subunits with two hexameric rings stacked one on top of the other. Interacts with SYNGAP1 and CAMK2N2. Interacts with MPDZ. Interacts with FOXO3. Interacts (when in a kinase inactive state not associated with calmodulin) with ARC; leading to target ARC to inactive synapses. Interacts with CAMK2N1; this interaction requires CAMK2B activation by Ca(2+). Autophosphorylation of Thr-287 following activation by Ca(2+)/calmodulin. Phosphorylation of Thr-287 locks the kinase into an activated state. As to expression, widely expressed. Expressed in adult and fetal brain. Expression is slightly lower in fetal brain. Expressed in skeletal muscle.

It is found in the cytoplasm. The protein localises to the cytoskeleton. Its subcellular location is the microtubule organizing center. The protein resides in the centrosome. It localises to the sarcoplasmic reticulum membrane. It is found in the synapse. It catalyses the reaction L-seryl-[protein] + ATP = O-phospho-L-seryl-[protein] + ADP + H(+). The catalysed reaction is L-threonyl-[protein] + ATP = O-phospho-L-threonyl-[protein] + ADP + H(+). With respect to regulation, activated by Ca(2+)/calmodulin. Binding of calmodulin results in conformational change that relieves intrasteric autoinhibition and allows autophosphorylation of Thr-287 which turns the kinase in a constitutively active form and confers to the kinase a Ca(2+)-independent activity. Calcium/calmodulin-dependent protein kinase that functions autonomously after Ca(2+)/calmodulin-binding and autophosphorylation, and is involved in dendritic spine and synapse formation, neuronal plasticity and regulation of sarcoplasmic reticulum Ca(2+) transport in skeletal muscle. In neurons, plays an essential structural role in the reorganization of the actin cytoskeleton during plasticity by binding and bundling actin filaments in a kinase-independent manner. This structural function is required for correct targeting of CaMK2A, which acts downstream of NMDAR to promote dendritic spine and synapse formation and maintain synaptic plasticity which enables long-term potentiation (LTP) and hippocampus-dependent learning. In developing hippocampal neurons, promotes arborization of the dendritic tree and in mature neurons, promotes dendritic remodeling. Also regulates the migration of developing neurons. Participates in the modulation of skeletal muscle function in response to exercise. In slow-twitch muscles, is involved in regulation of sarcoplasmic reticulum (SR) Ca(2+) transport and in fast-twitch muscle participates in the control of Ca(2+) release from the SR through phosphorylation of triadin, a ryanodine receptor-coupling factor, and phospholamban (PLN/PLB), an endogenous inhibitor of SERCA2A/ATP2A2. In response to interferon-gamma (IFN-gamma) stimulation, catalyzes phosphorylation of STAT1, stimulating the JAK-STAT signaling pathway. Phosphorylates reticulophagy regulator RETREG1 at 'Ser-151' under endoplasmic reticulum stress conditions which enhances RETREG1 oligomerization and its membrane scission and reticulophagy activity. The protein is Calcium/calmodulin-dependent protein kinase type II subunit beta (CAMK2B) of Homo sapiens (Human).